The following is a 148-amino-acid chain: Ubiquitin-conjugating enzyme E2 11 (148 aa).

The region spanning 1–147 (MASKRILKEL…ARSWTQKYAM (147 aa)) is the UBC core domain. Catalysis depends on C85, which acts as the Glycyl thioester intermediate.

Belongs to the ubiquitin-conjugating enzyme family. Interacts with the E3 ubiquitin-protein ligases MBR1 and MBR2. As to expression, ubiquitously expressed. Mainly in petals.

The catalysed reaction is S-ubiquitinyl-[E1 ubiquitin-activating enzyme]-L-cysteine + [E2 ubiquitin-conjugating enzyme]-L-cysteine = [E1 ubiquitin-activating enzyme]-L-cysteine + S-ubiquitinyl-[E2 ubiquitin-conjugating enzyme]-L-cysteine.. It functions in the pathway protein modification; protein ubiquitination. Accepts the ubiquitin from the E1 complex and catalyzes its covalent attachment to other proteins. Mediates the selective degradation of short-lived and abnormal proteins. This Arabidopsis thaliana (Mouse-ear cress) protein is Ubiquitin-conjugating enzyme E2 11 (UBC11).